A 956-amino-acid chain; its full sequence is DNA ligase 4 (956 aa).

ATP-binding residues include E307, K309, I310, R314, E371, F409, E476, K481, K498, and K500. Catalysis depends on K309, which acts as the N6-AMP-lysine intermediate. E371 serves as a coordination point for Mg(2+). E476 serves as a coordination point for Mg(2+). The interval 666 to 700 (LEDRKRRNAGPGRGAKRLKLANVSSDEDELGTDER) is disordered. BRCT domains are found at residues 700–793 (RPTS…PRNL) and 857–956 (PKGM…DYPL).

The protein belongs to the ATP-dependent DNA ligase family. It depends on Mg(2+) as a cofactor.

The protein resides in the nucleus. It catalyses the reaction ATP + (deoxyribonucleotide)n-3'-hydroxyl + 5'-phospho-(deoxyribonucleotide)m = (deoxyribonucleotide)n+m + AMP + diphosphate.. DNA ligase involved in DNA non-homologous end joining (NHEJ); required for double-strand break (DSB) repair. The protein is DNA ligase 4 (LIG4) of Yarrowia lipolytica (strain CLIB 122 / E 150) (Yeast).